A 251-amino-acid chain; its full sequence is uncharacterized protein (251 aa).

10-34 (ITGAGSGIGKKAAVMFAERGAKVAI) provides a ligand contact to NADP(+). Residue Ser139 participates in substrate binding. Tyr152 functions as the Proton acceptor in the catalytic mechanism.

This sequence belongs to the short-chain dehydrogenases/reductases (SDR) family.

This is an uncharacterized protein from Thermotoga maritima (strain ATCC 43589 / DSM 3109 / JCM 10099 / NBRC 100826 / MSB8).